We begin with the raw amino-acid sequence, 116 residues long: Protein Rev (116 aa).

Phosphoserine; by host CK2 is present on residues serine 5 and serine 8. The segment at 18–26 is homomultimerization; the sequence is LIKFLYQSN. The tract at residues 23–48 is disordered; the sequence is YQSNPPPNPEGTRQARRNRRRRWRER. Residues 34 to 50 carry the Nuclear localization signal and RNA-binding (RRE) motif; the sequence is TRQARRNRRRRWRERQR. The span at 36 to 48 shows a compositional bias: basic residues; the sequence is QARRNRRRRWRER. Residues 73 to 84 carry the Nuclear export signal and binding to XPO1 motif; sequence LQLPPLERLNLD. The tract at residues 90–116 is disordered; that stretch reads GTSGTQGVGSPEILVESPAVLEPGTKE. Phosphoserine; by host is present on residues serine 92 and serine 99.

The protein belongs to the HIV-1 REV protein family. As to quaternary structure, homomultimer; when bound to the RRE. Multimeric assembly is essential for activity and may involve XPO1. Binds to human KPNB1, XPO1, TNPO1, RANBP5 and IPO7. Interacts with the viral Integrase. Interacts with human KHDRBS1. Interacts with human NAP1; this interaction decreases Rev multimerization and stimulates its activity. Interacts with human DEAD-box helicases DDX3 and DDX24; these interactions may serve for viral RNA export to the cytoplasm and packaging, respectively. Interacts with human PSIP1; this interaction may inhibit HIV-1 DNA integration by promoting dissociation of the Integrase-LEDGF/p75 complex. In terms of processing, asymmetrically arginine dimethylated at one site by host PRMT6. Methylation impairs the RNA-binding activity and export of viral RNA from the nucleus to the cytoplasm. Phosphorylated by protein kinase CK2. Presence of, and maybe binding to the N-terminus of the regulatory beta subunit of CK2 is necessary for CK2-mediated Rev's phosphorylation.

The protein resides in the host nucleus. Its subcellular location is the host nucleolus. It localises to the host cytoplasm. In terms of biological role, escorts unspliced or incompletely spliced viral pre-mRNAs (late transcripts) out of the nucleus of infected cells. These pre-mRNAs carry a recognition sequence called Rev responsive element (RRE) located in the env gene, that is not present in fully spliced viral mRNAs (early transcripts). This function is essential since most viral proteins are translated from unspliced or partially spliced pre-mRNAs which cannot exit the nucleus by the pathway used by fully processed cellular mRNAs. Rev itself is translated from a fully spliced mRNA that readily exits the nucleus. Rev's nuclear localization signal (NLS) binds directly to KPNB1/Importin beta-1 without previous binding to KPNA1/Importin alpha-1. KPNB1 binds to the GDP bound form of RAN (Ran-GDP) and targets Rev to the nucleus. In the nucleus, the conversion from Ran-GDP to Ran-GTP dissociates Rev from KPNB1 and allows Rev's binding to the RRE in viral pre-mRNAs. Rev multimerization on the RRE via cooperative assembly exposes its nuclear export signal (NES) to the surface. Rev can then form a complex with XPO1/CRM1 and Ran-GTP, leading to nuclear export of the complex. Conversion from Ran-GTP to Ran-GDP mediates dissociation of the Rev/RRE/XPO1/RAN complex, so that Rev can return to the nucleus for a subsequent round of export. Beside KPNB1, also seems to interact with TNPO1/Transportin-1, RANBP5/IPO5 and IPO7/RANBP7 for nuclear import. The nucleoporin-like HRB/RIP is an essential cofactor that probably indirectly interacts with Rev to release HIV RNAs from the perinuclear region to the cytoplasm. The sequence is that of Protein Rev from Human immunodeficiency virus type 1 group M subtype B (isolate OYI) (HIV-1).